Consider the following 186-residue polypeptide: Dehydrin Rab18 (186 aa).

Positions 1–186 (MASYQNRPGG…IKEKLPGGGR (186 aa)) are disordered. A compositionally biased stretch (gly residues) spans 30–85 (PMGGGGYGTGGGGGATGGQGYGTGGQGYGSGGQGYGTGGQGYGTGTGTEGFGTGGG). Basic and acidic residues predominate over residues 89-98 (HGQEQLHKES). The span at 105–116 (MLHRSGSGSSSS) shows a compositional bias: low complexity. The segment covering 133-144 (KIKEKLPGHHDQ) has biased composition (basic and acidic residues). Gly residues predominate over residues 152-164 (GGMGSGYDAGGYG). Residues 165-186 (GEHHEKKGMMDKIKEKLPGGGR) show a composition bias toward basic and acidic residues.

The protein belongs to the plant dehydrin family.

The protein is Dehydrin Rab18 (RAB18) of Arabidopsis thaliana (Mouse-ear cress).